A 337-amino-acid chain; its full sequence is 6-phosphogluconolactonase (337 aa).

Belongs to the cycloisomerase 2 family.

The catalysed reaction is 6-phospho-D-glucono-1,5-lactone + H2O = 6-phospho-D-gluconate + H(+). The protein operates within carbohydrate degradation; pentose phosphate pathway; D-ribulose 5-phosphate from D-glucose 6-phosphate (oxidative stage): step 2/3. Catalyzes the hydrolysis of 6-phosphogluconolactone to 6-phosphogluconate. The polypeptide is 6-phosphogluconolactonase (Blochmanniella pennsylvanica (strain BPEN)).